We begin with the raw amino-acid sequence, 475 residues long: MSPQTETKTSAGFKAGVKDYRLTYYTPEYKTKDTDILAAFRVTPQPGVPPEEAGAAVAAESSTGTWTTVWTDGLTSLDRYKGRCYDIEPVAGEENQFIAYVAYPLDLFEEGSVTNLFTSIVGNVFGFKALRALRLEDLRIPPAYTKTFQGPPHGIQVERDKLNKYGRPLLGCTIKPKLGLSAKNYGRAVYECLRGGLDFTKDDENVNSQPFMRWRDRFLFVAEAIYKSQAETGEIKGHYLNATAGTCEEMLKRAQCARELGMPIVMHDYLTGGFTANTTLAHYCRDNGLLLHIHRAMHAVLDRQKNHGMHFRVLAKALRLSGGDHVHSGTVVGKLEGEREVTLGFVDLLRDDYIEKDRSRGVYFTQDWVSLPGVLPVASGGIHVWHMPALTEIFGDDSVLQFGGGTLGHPWGNAPGAVANRVALEACVQARNEGRDLAREGNEIIREAAKWSPELAAACEVWKEIKFEFETIDTL.

Residues 1-2 (MS) constitute a propeptide that is removed on maturation. Pro3 carries the N-acetylproline modification. Residue Lys14 is modified to N6,N6,N6-trimethyllysine. Asn123 and Thr173 together coordinate substrate. Lys175 acts as the Proton acceptor in catalysis. Lys177 provides a ligand contact to substrate. The Mg(2+) site is built by Lys201, Asp203, and Glu204. Lys201 bears the N6-carboxylysine mark. The Proton acceptor role is filled by His294. The substrate site is built by Arg295, His327, and Ser379.

It belongs to the RuBisCO large chain family. Type I subfamily. Heterohexadecamer of 8 large chains and 8 small chains; disulfide-linked. The disulfide link is formed within the large subunit homodimers. Requires Mg(2+) as cofactor. The disulfide bond which can form in the large chain dimeric partners within the hexadecamer appears to be associated with oxidative stress and protein turnover.

The protein resides in the plastid. It is found in the chloroplast. It carries out the reaction 2 (2R)-3-phosphoglycerate + 2 H(+) = D-ribulose 1,5-bisphosphate + CO2 + H2O. It catalyses the reaction D-ribulose 1,5-bisphosphate + O2 = 2-phosphoglycolate + (2R)-3-phosphoglycerate + 2 H(+). Its function is as follows. RuBisCO catalyzes two reactions: the carboxylation of D-ribulose 1,5-bisphosphate, the primary event in carbon dioxide fixation, as well as the oxidative fragmentation of the pentose substrate in the photorespiration process. Both reactions occur simultaneously and in competition at the same active site. The polypeptide is Ribulose bisphosphate carboxylase large chain (Chara vulgaris (Common stonewort)).